We begin with the raw amino-acid sequence, 294 residues long: ATP synthase gamma chain (294 aa).

This sequence belongs to the ATPase gamma chain family. As to quaternary structure, F-type ATPases have 2 components, CF(1) - the catalytic core - and CF(0) - the membrane proton channel. CF(1) has five subunits: alpha(3), beta(3), gamma(1), delta(1), epsilon(1). CF(0) has three main subunits: a, b and c.

The protein localises to the cell inner membrane. Produces ATP from ADP in the presence of a proton gradient across the membrane. The gamma chain is believed to be important in regulating ATPase activity and the flow of protons through the CF(0) complex. The polypeptide is ATP synthase gamma chain (Paraburkholderia xenovorans (strain LB400)).